The primary structure comprises 320 residues: HPr kinase/phosphorylase (320 aa).

Active-site residues include His141 and Lys162. Residue 156–163 (GHSGLGKS) coordinates ATP. Ser163 contributes to the Mg(2+) binding site. Asp180 acts as the Proton acceptor; for phosphorylation activity. Proton donor; for dephosphorylation activity in catalysis. The segment at 204–213 (LEVRGLGILN) is important for the catalytic mechanism of both phosphorylation and dephosphorylation. Glu205 serves as a coordination point for Mg(2+). The active site involves Arg248. The important for the catalytic mechanism of dephosphorylation stretch occupies residues 269 to 274 (PVAVGR).

Belongs to the HPrK/P family. In terms of assembly, homohexamer. The cofactor is Mg(2+).

It catalyses the reaction [HPr protein]-L-serine + ATP = [HPr protein]-O-phospho-L-serine + ADP + H(+). It carries out the reaction [HPr protein]-O-phospho-L-serine + phosphate + H(+) = [HPr protein]-L-serine + diphosphate. In terms of biological role, catalyzes the ATP- as well as the pyrophosphate-dependent phosphorylation of a specific serine residue in HPr, a phosphocarrier protein of the phosphoenolpyruvate-dependent sugar phosphotransferase system (PTS). HprK/P also catalyzes the pyrophosphate-producing, inorganic phosphate-dependent dephosphorylation (phosphorolysis) of seryl-phosphorylated HPr (P-Ser-HPr). This chain is HPr kinase/phosphorylase, found in Neisseria meningitidis serogroup C / serotype 2a (strain ATCC 700532 / DSM 15464 / FAM18).